The chain runs to 276 residues: Elongation factor Ts (276 aa).

The tract at residues 81–84 (TDFV) is involved in Mg(2+) ion dislocation from EF-Tu.

The protein belongs to the EF-Ts family.

It localises to the cytoplasm. Functionally, associates with the EF-Tu.GDP complex and induces the exchange of GDP to GTP. It remains bound to the aminoacyl-tRNA.EF-Tu.GTP complex up to the GTP hydrolysis stage on the ribosome. In Leifsonia xyli subsp. xyli (strain CTCB07), this protein is Elongation factor Ts.